The sequence spans 556 residues: Undecaprenyl phosphate-alpha-4-amino-4-deoxy-L-arabinose arabinosyl transferase (556 aa).

A run of 10 helical transmembrane segments spans residues 88 to 108 (FASVFSTALSALLVFWLAMML), 116 to 136 (LLAATIYLTSLLVYGIGTYSV), 179 to 199 (FMTKGFLALALPVISVLPVAL), 207 to 227 (LLLFGPLAIVVAVLLSAPWAL), 258 to 278 (APFWYYLPFLIVGTFPWLALL), 296 to 316 (FFLLCWMVMPLLFFSIAKGKL), 319 to 339 (YILPCFAPLALLMAAWISGLA), 355 to 375 (IVFGGVLGLAVAALGLGIIVP), 384 to 404 (LTIISGIVCFIGWIAFAAVSL), and 410 to 430 (WGYLVAGCPLFLALLVGGSIP).

This sequence belongs to the glycosyltransferase 83 family.

It localises to the cell inner membrane. It carries out the reaction 4-amino-4-deoxy-alpha-L-arabinopyranosyl di-trans,octa-cis-undecaprenyl phosphate + lipid IVA = lipid IIA + di-trans,octa-cis-undecaprenyl phosphate.. Its pathway is lipopolysaccharide metabolism; 4-amino-4-deoxy-beta-L-arabinose-lipid A biosynthesis. Functionally, catalyzes the transfer of the L-Ara4N moiety of the glycolipid undecaprenyl phosphate-alpha-L-Ara4N to lipid A. The modified arabinose is attached to lipid A and is required for resistance to polymyxin and cationic antimicrobial peptides. The polypeptide is Undecaprenyl phosphate-alpha-4-amino-4-deoxy-L-arabinose arabinosyl transferase (Pectobacterium atrosepticum (strain SCRI 1043 / ATCC BAA-672) (Erwinia carotovora subsp. atroseptica)).